A 79-amino-acid polypeptide reads, in one-letter code: Defensin-like protein 272 (79 aa).

Positions 1-24 are cleaved as a signal peptide; it reads MSSKIKFVALLIVVISLLLNNAQS. Cystine bridges form between Cys-34-Cys-77, Cys-43-Cys-63, Cys-49-Cys-75, and Cys-53-Cys-76.

The protein belongs to the DEFL family.

The protein localises to the secreted. In Arabidopsis thaliana (Mouse-ear cress), this protein is Defensin-like protein 272.